The following is a 363-amino-acid chain: Fructose-bisphosphate aldolase C (363 aa).

Position 5 is a phosphotyrosine (Tyr5). Phosphoserine occurs at positions 36, 39, and 45. Residue Arg56 participates in substrate binding. N6-acetyllysine is present on Lys111. Residue Lys147 coordinates substrate. Catalysis depends on Glu188, which acts as the Proton acceptor. The Schiff-base intermediate with dihydroxyacetone-P role is filled by Lys230.

The protein belongs to the class I fructose-bisphosphate aldolase family. In terms of assembly, homotetramer. Interacts with ATP6V1E1. As to expression, expressed exclusively in Purkinje cells in bands running from anterior to posterior across most of the cerebellum. Expressed at higher levels in the brains of BSE-infected animals.

The catalysed reaction is beta-D-fructose 1,6-bisphosphate = D-glyceraldehyde 3-phosphate + dihydroxyacetone phosphate. The protein operates within carbohydrate degradation; glycolysis; D-glyceraldehyde 3-phosphate and glycerone phosphate from D-glucose: step 4/4. In Mus musculus (Mouse), this protein is Fructose-bisphosphate aldolase C (Aldoc).